Here is a 364-residue protein sequence, read N- to C-terminus: Biotin synthase (364 aa).

The 236-residue stretch at 68–303 folds into the Radical SAM core domain; sequence CCGNTVDLCS…QQILRYAGGR (236 aa). Residues C86, C90, and C93 each contribute to the [4Fe-4S] cluster site. The [2Fe-2S] cluster site is built by C131, C168, C228, and R298.

It belongs to the radical SAM superfamily. Biotin synthase family. In terms of assembly, homodimer. The cofactor is [4Fe-4S] cluster. Requires [2Fe-2S] cluster as cofactor.

The enzyme catalyses (4R,5S)-dethiobiotin + (sulfur carrier)-SH + 2 reduced [2Fe-2S]-[ferredoxin] + 2 S-adenosyl-L-methionine = (sulfur carrier)-H + biotin + 2 5'-deoxyadenosine + 2 L-methionine + 2 oxidized [2Fe-2S]-[ferredoxin]. It participates in cofactor biosynthesis; biotin biosynthesis; biotin from 7,8-diaminononanoate: step 2/2. Functionally, catalyzes the conversion of dethiobiotin (DTB) to biotin by the insertion of a sulfur atom into dethiobiotin via a radical-based mechanism. This chain is Biotin synthase, found in Microcystis aeruginosa (strain NIES-843 / IAM M-2473).